The sequence spans 561 residues: Oxygen-dependent choline dehydrogenase (561 aa).

6-35 contributes to the FAD binding site; sequence DYIIIGAGSAGNVLATRLTEDADVSVLLLE. His-475 functions as the Proton acceptor in the catalytic mechanism.

It belongs to the GMC oxidoreductase family. FAD serves as cofactor.

It catalyses the reaction choline + A = betaine aldehyde + AH2. It carries out the reaction betaine aldehyde + NAD(+) + H2O = glycine betaine + NADH + 2 H(+). It functions in the pathway amine and polyamine biosynthesis; betaine biosynthesis via choline pathway; betaine aldehyde from choline (cytochrome c reductase route): step 1/1. Functionally, involved in the biosynthesis of the osmoprotectant glycine betaine. Catalyzes the oxidation of choline to betaine aldehyde and betaine aldehyde to glycine betaine at the same rate. This is Oxygen-dependent choline dehydrogenase from Pseudomonas aeruginosa (strain UCBPP-PA14).